The chain runs to 490 residues: Protein U94 (490 aa).

In terms of domain architecture, PV NS1-Nuc spans 1 to 210 (MFSIINPSDD…SHFNKKPNVK (210 aa)). One can recognise an SF3 helicase domain in the interval 312-463 (DPILAGTILY…IPRNFPVIQK (152 aa)). 338–345 (GPPGCGKS) lines the ATP pocket.

It is found in the host nucleus. In Human herpesvirus 6B (HHV-6 variant B), this protein is Protein U94 (U94).